A 444-amino-acid chain; its full sequence is Vacuolar protein sorting-associated protein 4B (444 aa).

The region spanning 4 to 82 is the MIT domain; sequence TNTNLQKAID…KEYLKKKEKK (79 aa). A coiled-coil region spans residues 19–82; it reads AQEDKAGNYE…KEYLKKKEKK (64 aa). A disordered region spans residues 77-118; that stretch reads KKKEKKPQKPVKEEQSGPVDEKGNDSDGEAESDDPEKKKLQN. Basic and acidic residues predominate over residues 86 to 101; it reads PVKEEQSGPVDEKGND. Residues Ser-102 and Ser-108 each carry the phosphoserine modification. 174–181 is a binding site for ATP; it reads GPPGTGKS. Ser-410 carries the phosphoserine modification.

It belongs to the AAA ATPase family. In terms of assembly, proposed to be monomeric or homodimeric in nucleotide-free form and to oligomerize upon binding to ATP to form two stacked hexameric or heptameric rings with a central pore through which ESCRT-III substrates are translocated in an ATP-dependent manner. In vitro, associates on the inside of a helical tubular structure formed by a CHMP2A-CHMP3 polymer. Interacts with CHMP1A, CHMP1B, CHMP4B and CHMP6. Interacts with CHMP2A. Interacts with VPS4A; the interaction suggests a heteromeric assembly with VPS4A. Interacts with VTA1. As to expression, high level expression seen in the kidney. It is also expressed in the heart, brain, spleen, lung, liver, skeletal muscle, and testis.

Its subcellular location is the late endosome membrane. It catalyses the reaction ATP + H2O = ADP + phosphate + H(+). Functionally, involved in late steps of the endosomal multivesicular bodies (MVB) pathway. Recognizes membrane-associated ESCRT-III assemblies and catalyzes their disassembly, possibly in combination with membrane fission. Redistributes the ESCRT-III components to the cytoplasm for further rounds of MVB sorting. MVBs contain intraluminal vesicles (ILVs) that are generated by invagination and scission from the limiting membrane of the endosome and mostly are delivered to lysosomes enabling degradation of membrane proteins, such as stimulated growth factor receptors, lysosomal enzymes and lipids. VPS4A/B are required for the exosomal release of SDCBP, CD63 and syndecan. In terms of biological role, (Microbial infection) In conjunction with the ESCRT machinery also appears to function in topologically equivalent membrane fission events, such as the terminal stages of cytokinesis and enveloped virus budding (lentiviruses). This chain is Vacuolar protein sorting-associated protein 4B, found in Mus musculus (Mouse).